The sequence spans 292 residues: ATP synthase gamma chain (292 aa).

This sequence belongs to the ATPase gamma chain family. As to quaternary structure, F-type ATPases have 2 components, CF(1) - the catalytic core - and CF(0) - the membrane proton channel. CF(1) has five subunits: alpha(3), beta(3), gamma(1), delta(1), epsilon(1). CF(0) has three main subunits: a, b and c.

It is found in the cell inner membrane. In terms of biological role, produces ATP from ADP in the presence of a proton gradient across the membrane. The gamma chain is believed to be important in regulating ATPase activity and the flow of protons through the CF(0) complex. In Chlorobaculum parvum (strain DSM 263 / NCIMB 8327) (Chlorobium vibrioforme subsp. thiosulfatophilum), this protein is ATP synthase gamma chain.